A 544-amino-acid chain; its full sequence is MATEEIHSLYDTILILDFGSQYSHLITRRCRELNVYCEMLPCTQKISDLSWKPKGVILSGSPYSVYAPDAPHVDPEVFTLGVPILGICYGLQEIARVHGGTVDAHTHREYGYAKIEVVKTGKKEQDALFEGIEMEADGGLQVWMSHGDQLTSLPPNFVTIASTPTSPYTAVAHESKPIYGVQFHPEVSHSPKGKEVIAAFVKNVCSVRDGWSMESFIPKEIARIRQICGEKGQVIGAVSGGVDSTVAAKLMHEAIGDRFHAIMVDNGVLRKDEAKKVHKMLTVDLGVNLTVVDASELFLARLKGVEDPERKRKIIGNTFIEVFEAEAAKLEAAAEKELAEKGGEAKGKIEWLLQGTLYPDVIESISFKGPSATIKTHHNVGGLLEDMKLKLIEPLRELFKDEVRALGRLLNIPEHLVGRHPFPGPGLAIRILGEVTREQIAILQHADDIYIEEVRAAGLYDQISQAFVALLPVKAVGVAGDARTYDQVVAVRAVSTEDFMTADWFVFPPQVLKRISSRITNEVKGVNRVVYDITSKPPGTVEWL.

A Glutamine amidotransferase type-1 domain is found at 12 to 210; the sequence is TILILDFGSQ…VKNVCSVRDG (199 aa). Catalysis depends on C88, which acts as the Nucleophile. Active-site residues include H184 and E186. The GMPS ATP-PPase domain maps to 211–419; that stretch reads WSMESFIPKE…LNIPEHLVGR (209 aa). 239–245 is an ATP binding site; it reads SGGVDST. Residues R312, D481, K536, and E542 each contribute to the XMP site.

As to quaternary structure, homodimer. Also forms a small population of homotetramers. Mg(2+) serves as cofactor.

The protein resides in the cytoplasm. It is found in the cytosol. The enzyme catalyses XMP + L-glutamine + ATP + H2O = GMP + L-glutamate + AMP + diphosphate + 2 H(+). Its pathway is purine metabolism; GMP biosynthesis; GMP from XMP (L-Gln route): step 1/1. Catalyzes the conversion of xanthine monophosphate (XMP) to GMP in the presence of glutamine and ATP through an adenyl-XMP intermediate. This chain is GMP synthase [glutamine-hydrolyzing], found in Cryptococcus neoformans var. neoformans serotype D (strain JEC21 / ATCC MYA-565) (Filobasidiella neoformans).